The following is a 286-amino-acid chain: Release factor glutamine methyltransferase (286 aa).

S-adenosyl-L-methionine is bound by residues 121-125 (GTGTG), D144, W172, and N188. Residue 188–191 (NPPY) participates in substrate binding.

Belongs to the protein N5-glutamine methyltransferase family. PrmC subfamily.

The enzyme catalyses L-glutaminyl-[peptide chain release factor] + S-adenosyl-L-methionine = N(5)-methyl-L-glutaminyl-[peptide chain release factor] + S-adenosyl-L-homocysteine + H(+). In terms of biological role, methylates the class 1 translation termination release factors RF1/PrfA and RF2/PrfB on the glutamine residue of the universally conserved GGQ motif. The chain is Release factor glutamine methyltransferase from Vibrio cholerae serotype O1 (strain ATCC 39315 / El Tor Inaba N16961).